The sequence spans 166 residues: Replication restart protein DnaT (166 aa).

The protein belongs to the DnaT family. In terms of assembly, homooligomerizes. Interacts with PriB. Component of the replication restart primosome. Primosome assembly occurs via a 'hand-off' mechanism. PriA binds to replication forks, subsequently PriB then DnaT bind; DnaT then displaces ssDNA to generate the helicase loading substrate.

Involved in the restart of stalled replication forks, which reloads the replicative helicase on sites other than the origin of replication. Can function in multiple replication restart pathways. Displaces ssDNA from a PriB-ssDNA complex. Probably forms a spiral filament on ssDNA. This chain is Replication restart protein DnaT, found in Buchnera aphidicola subsp. Schizaphis graminum (strain Sg).